The primary structure comprises 306 residues: MALPSSVESLLSTVWDFITINRLLTGAGIYFLLLNAKGLPGVWHYRLFKGLFIELVWKRSTTPAPLLDSQGRPRLYSYFVTECSNPVIECDYNLHKSNSTFFSDLDINRTQLMMTHFKHVLSTASMPRKTKTANGNGDDQKRKRPLMMAMGGVSCLFHREIKPLQRYEVWSRVLAWDEKWVYVVSYFVKKGSLSRDGNFKGDLDLDPKVNAKVVLASCMARYVFKEGRITVKPERVLQECGLFPLAEEAVAGEKAEKASVDSWGKEQFEEARQKGLVTAGKFSGLEVLPLMTGFGESGVLGRYNDF.

Belongs to the lcsJ thioesterase family.

In terms of biological role, part of the gene cluster that mediates the biosynthesis of aspercryptins, linear lipopeptides built from six amino acids including 2 highly unusual and nonproteogenic amino acids, 2-amino-octanoic acid (2aoa) and 2-amino-dodecanol (2adol). The core structure of aspercryptins is as follows: Ser/Ala-Thr-Ile/Val-2aoa-Asn-2adol. The first step of aspercryptin biosynthesis is the generation of the fatty acid precursors, octanoic and dodecanoic acids, by the FAS subunits atnF and atnM. The fatty acid precursors are likely transformed into the corresponding alpha-amino fatty acids in three steps. First, they are hydroxylated by the cytochrome P450 monooxygenase atnE, then oxidized to the corresponding alpha-keto acids by the NAD(P)-dependent oxidoreductase atnD, and finally converted to the alpha-amino fatty acids by the PLP-dependent aminotransferases atnH or atnJ. the alpha-amino fatty acids, 2-amino-octanoic and 2-amino-dodecanoic acids, are recognized, activated, and covalently tethered to the NRPS atnA by its fourth and sixth adenylation domains. The second module of atnA is the Thr module and contains an epimerase (E) domain responsible for the epimerization of Thr to D-allo-Thr. Additionally, despite atnA having only one epimerase domain, the first amino acid of aspercryptin A1 is D-Ser, suggesting that serine is either loaded directly as D-Ser on the first module or that the epimerase domain in the threonine module epimerizes both L-Ser and L-Thr. After condensation of the hexapeptide of aspercryptin, the C-terminal reductase (TE) domain might be involved in the reductive release and production of the aldehyde hexapeptide. Further reduction would generate aspercryptins. The variety of aspercryptins produced reflects the flexibility of the atnA NRPS, allowing incorporation of alanine instead of serine, valine for isoleucine, and a C10 fatty amino alcohol instead of the C12 version. AtnB seems to be involved in the selectivity for Ile versus Val by the third module. Moreover, type B, C and D aspercryptins have an additional N-terminal cichorine, acetyl and propionyl group respectively. The sequence is that of Probable thioesterase atnL from Emericella nidulans (strain FGSC A4 / ATCC 38163 / CBS 112.46 / NRRL 194 / M139) (Aspergillus nidulans).